Here is a 206-residue protein sequence, read N- to C-terminus: Small ribosomal subunit protein uS4c (206 aa).

One can recognise an S4 RNA-binding domain in the interval 94-152 (MRLDNIVFRLGMAPTIPAARQLVNHRHILVNDFTVNIPSYSCKLGDKISVQKRFESKTN).

This sequence belongs to the universal ribosomal protein uS4 family. Part of the 30S ribosomal subunit. Contacts protein S5. The interaction surface between S4 and S5 is involved in control of translational fidelity.

The protein localises to the plastid. Its subcellular location is the chloroplast. Its function is as follows. One of the primary rRNA binding proteins, it binds directly to 16S rRNA where it nucleates assembly of the body of the 30S subunit. Functionally, with S5 and S12 plays an important role in translational accuracy. The polypeptide is Small ribosomal subunit protein uS4c (rps4) (Chara vulgaris (Common stonewort)).